A 340-amino-acid chain; its full sequence is Nod factor export ATP-binding protein I (340 aa).

The span at 1–24 (MLKRKLGPEDLRRLETPAIERESH) shows a compositional bias: basic and acidic residues. The interval 1–34 (MLKRKLGPEDLRRLETPAIERESHGQTSAKSSVP) is disordered. Residues 25–34 (GQTSAKSSVP) show a composition bias toward polar residues. The ABC transporter domain occupies 42–272 (VDFAGVTKSY…HIGCQVMEIY (231 aa)). Residue 74–81 (GPNGAGKS) participates in ATP binding.

The protein belongs to the ABC transporter superfamily. Lipooligosaccharide exporter (TC 3.A.1.102) family. As to quaternary structure, the complex is composed of two ATP-binding proteins (NodI) and two transmembrane proteins (NodJ).

Its subcellular location is the cell inner membrane. Part of the ABC transporter complex NodIJ involved in the export of the nodulation factors (Nod factors), the bacterial signal molecules that induce symbiosis and subsequent nodulation induction. Nod factors are LCO (lipo-chitin oligosaccharide), a modified beta-1,4-linked N-acetylglucosamine oligosaccharide. This subunit is responsible for energy coupling to the transport system. The sequence is that of Nod factor export ATP-binding protein I from Mesorhizobium japonicum (strain LMG 29417 / CECT 9101 / MAFF 303099) (Mesorhizobium loti (strain MAFF 303099)).